The sequence spans 231 residues: MIIRDLPLKLRDFPEKEKPRERLLHFGAEHLSNNELLAILLRTGTKHESVMNLAHRLLRTFDGLRLLKGASAQELSSIPGIGTVKAVQILAAIELGSRIHKTSAGEHCVIRSPEDGAKYVMEDMRFLSQEHFVCLYLNTKNQVIHKRTVFIGSLNSSIVHPREVFKEAFKRSAASFICVHNHPSGDPTPSREDIEVTRRLFECGNLIGIELLDHLVIGDKKFVSLKEKGYL.

The region spanning V109–L231 is the MPN domain. Residues H180, H182, and D193 each contribute to the Zn(2+) site. Positions H180–D193 match the JAMM motif motif.

This sequence belongs to the UPF0758 family.

This is UPF0758 protein RBAM_025090 from Bacillus velezensis (strain DSM 23117 / BGSC 10A6 / LMG 26770 / FZB42) (Bacillus amyloliquefaciens subsp. plantarum).